A 789-amino-acid chain; its full sequence is Protein translocase subunit SecA 2 (789 aa).

ATP is bound by residues glutamine 79, 97-101 (GEGKT), and aspartate 487.

Belongs to the SecA family. In terms of assembly, monomer and homodimer. Part of the essential Sec protein translocation apparatus which comprises SecA, SecYEG and auxiliary proteins SecDF. Other proteins may also be involved.

The protein resides in the cell membrane. It localises to the cytoplasm. It carries out the reaction ATP + H2O + cellular proteinSide 1 = ADP + phosphate + cellular proteinSide 2.. Functionally, part of the Sec protein translocase complex. Interacts with the SecYEG preprotein conducting channel. Has a central role in coupling the hydrolysis of ATP to the transfer of proteins into and across the cell membrane, serving as an ATP-driven molecular motor driving the stepwise translocation of polypeptide chains across the membrane. The chain is Protein translocase subunit SecA 2 from Pediococcus pentosaceus (strain ATCC 25745 / CCUG 21536 / LMG 10740 / 183-1w).